Here is a 467-residue protein sequence, read N- to C-terminus: Probable glutamate decarboxylase gamma (467 aa).

At Lys-278 the chain carries N6-(pyridoxal phosphate)lysine.

The protein belongs to the group II decarboxylase family. Pyridoxal 5'-phosphate is required as a cofactor.

The enzyme catalyses L-glutamate + H(+) = 4-aminobutanoate + CO2. The protein is Probable glutamate decarboxylase gamma of Listeria monocytogenes serovar 1/2a (strain ATCC BAA-679 / EGD-e).